The primary structure comprises 332 residues: L-lactate dehydrogenase A chain (332 aa).

Residues 29 to 57 (GMVG…MEDK) and Arg-99 each bind NAD(+). Substrate is bound by residues Arg-106, Asn-138, and Arg-169. Asn-138 is an NAD(+) binding site. Catalysis depends on His-193, which acts as the Proton acceptor. Residue Thr-248 coordinates substrate.

The protein belongs to the LDH/MDH superfamily. LDH family. In terms of assembly, homotetramer.

The protein localises to the cytoplasm. The catalysed reaction is (S)-lactate + NAD(+) = pyruvate + NADH + H(+). Its pathway is fermentation; pyruvate fermentation to lactate; (S)-lactate from pyruvate: step 1/1. In terms of biological role, interconverts simultaneously and stereospecifically pyruvate and lactate with concomitant interconversion of NADH and NAD(+). The sequence is that of L-lactate dehydrogenase A chain (ldha) from Sphyraena lucasana (Lucas barracuda).